The primary structure comprises 206 residues: Ribosomal RNA large subunit methyltransferase E (206 aa).

Positions 60, 62, 80, 96, and 121 each coordinate S-adenosyl-L-methionine. The Proton acceptor role is filled by Lys161.

This sequence belongs to the class I-like SAM-binding methyltransferase superfamily. RNA methyltransferase RlmE family.

Its subcellular location is the cytoplasm. It catalyses the reaction uridine(2552) in 23S rRNA + S-adenosyl-L-methionine = 2'-O-methyluridine(2552) in 23S rRNA + S-adenosyl-L-homocysteine + H(+). Its function is as follows. Specifically methylates the uridine in position 2552 of 23S rRNA at the 2'-O position of the ribose in the fully assembled 50S ribosomal subunit. The sequence is that of Ribosomal RNA large subunit methyltransferase E from Nitrosomonas eutropha (strain DSM 101675 / C91 / Nm57).